The sequence spans 486 residues: Transcription factor bHLH49 (486 aa).

Positions 1 to 17 (MDLSAKDEFSAEKRNPD) are enriched in basic and acidic residues. Disordered regions lie at residues 1–30 (MDLSAKDEFSAEKRNPDNYDSVNNPSGDWR) and 194–300 (KEST…KDGY). 2 stretches are compositionally biased toward polar residues: residues 198-221 (VRSSEQAKPNVPGSGNVSEDTQSS) and 243-254 (QKNSEAAQSHRS). The span at 273-293 (QSPNSPGKKSNSGKQQGKQSS) shows a compositional bias: low complexity. One can recognise a bHLH domain in the interval 309 to 359 (QATNSHSLAERVRREKISERMKFLQDLVPGCNKVTGKAVMLDEIINYVQSL).

As to quaternary structure, homodimer. Interacts with IBH1. Expressed constitutively in roots, stems, and flowers.

It localises to the nucleus. Transcriptional activator involved in cell elongation. Regulates the expression of a subset of genes involved in cell expansion by binding to the G-box motif. This chain is Transcription factor bHLH49 (BHLH49), found in Arabidopsis thaliana (Mouse-ear cress).